The chain runs to 202 residues: Tetranectin (202 aa).

The signal sequence occupies residues methionine 1–alanine 21. 3 cysteine pairs are disulfide-bonded: cysteine 71/cysteine 81, cysteine 98/cysteine 197, and cysteine 173/cysteine 189. In terms of domain architecture, C-type lectin spans valine 77–glutamine 198.

Homotrimer. As to expression, highest expression in lung, skeletal muscle and heart. Expressed in retina.

It is found in the secreted. In terms of biological role, tetranectin binds to plasminogen and to isolated kringle 4. May be involved in the packaging of molecules destined for exocytosis. Plays a role in retinal function. In Mus musculus (Mouse), this protein is Tetranectin (Clec3b).